Reading from the N-terminus, the 737-residue chain is Protein bicaudal D homolog (737 aa).

Coiled-coil stretches lie at residues 1-255, 292-319, and 547-684; these read MAES…RNAE, GSSD…EKIF, and AENE…DRDR. The interval 72 to 97 is disordered; that stretch reads YRSQHQRSTRSELENEESLLEESSAK. Positions 686-737 are disordered; sequence VFKRSSTRAPTRETYQPPRAVRYPGSTTTAQQPAPSSSGGSRGGPRRGDNQQ. Residues 710-719 are compositionally biased toward polar residues; that stretch reads GSTTTAQQPA.

This sequence belongs to the BicD family. In terms of assembly, component of a dynein-regulating complex composed of at least bicd-1, dlc-1 and egal-1. Interacts with egal-1 and unc-83. In terms of tissue distribution, expressed in the excretory cell, body wall muscles, vulval muscle cells, PVD and FLP sensory neurons and AVF interneurons.

The protein resides in the nucleus envelope. It localises to the perikaryon. Its subcellular location is the cell projection. It is found in the dendrite. Functionally, part of a complex with dlc-1 and egal-1, which is recruited to the nuclear envelope by unc-83, where in turn, it recruits dynein to the nuclear surface and regulates nuclear migration in hypodermal precursor cells. Required for the formation of dendritic branches of PVD sensory neurons. In Caenorhabditis elegans, this protein is Protein bicaudal D homolog.